A 119-amino-acid chain; its full sequence is Large ribosomal subunit protein uL18 (119 aa).

Residues 1-22 are disordered; that stretch reads MGHVEKVARRHKIKTRSKARGQ. Basic residues predominate over residues 8–19; that stretch reads ARRHKIKTRSKA.

This sequence belongs to the universal ribosomal protein uL18 family. In terms of assembly, part of the 50S ribosomal subunit; part of the 5S rRNA/L5/L18/L25 subcomplex. Contacts the 5S and 23S rRNAs.

Its function is as follows. This is one of the proteins that bind and probably mediate the attachment of the 5S RNA into the large ribosomal subunit, where it forms part of the central protuberance. This is Large ribosomal subunit protein uL18 from Chlorobium phaeobacteroides (strain BS1).